The sequence spans 1914 residues: Zinc finger protein Rlf (1914 aa).

Phosphoserine is present on serine 41. The span at 521-540 (KQYRRRDLTDQHKEKRDKKP) shows a compositional bias: basic and acidic residues. The tract at residues 521-541 (KQYRRRDLTDQHKEKRDKKPI) is disordered. The C2H2-type 1 zinc-finger motif lies at 582-604 (YTCPVCIKKFKRKEMFVPHVMEH). Residue lysine 622 forms a Glycyl lysine isopeptide (Lys-Gly) (interchain with G-Cter in SUMO2) linkage. 2 positions are modified to phosphoserine: serine 632 and serine 634. C2H2-type zinc fingers lie at residues 671 to 696 (YPCPGTDCSRVFKQFKYLSVHLKAEH), 714 to 736 (EKCTYCRRHFMSAFHLREHEQVH), 742 to 766 (YMCVSIDCYARFGSVNELLNHKQKH), 771 to 795 (YKCELNGCNIVFSDLGQLYHHEAQH), and 801 to 825 (YTCNFLGCKKFYYSKIEYQNHLSMH). Residue lysine 839 forms a Glycyl lysine isopeptide (Lys-Gly) (interchain with G-Cter in SUMO2) linkage. Residues 882–907 (TETAENLKENSDSNSSDQLSHSSSAS) are disordered. The segment covering 893-907 (DSNSSDQLSHSSSAS) has biased composition (low complexity). The C2H2-type 7 zinc-finger motif lies at 954 to 979 (FTCGFDGCGSTYKNARGMQKHLRKVH). The segment at 993–1028 (LFPSLGNEHNQTTEKLDAEPKPCSDTNSDSPDEGLD) is disordered. The span at 1003-1014 (QTTEKLDAEPKP) shows a compositional bias: basic and acidic residues. C2H2-type zinc fingers lie at residues 1127 to 1152 (FFCELQGCKYEFVTREALLMHYLKKH) and 1172 to 1195 (FQCHICQRSFTRKTHLRIHYKNKH). A disordered region spans residues 1231–1290 (LGGDPSSNSEKPHCHPKKDECSSETDLESSCEETESKTSDISSPIGSHREEQEGREGRGS). Basic and acidic residues predominate over residues 1240 to 1251 (EKPHCHPKKDEC). Over residues 1252–1263 (SSETDLESSCEE) the composition is skewed to acidic residues. The segment covering 1277-1289 (SHREEQEGREGRG) has biased composition (basic and acidic residues). 5 consecutive C2H2-type zinc fingers follow at residues 1310-1335 (FHCIHKTCNSSFTNLKGLIRHYRTVH), 1362-1387 (FACKYKECNKRFLCSKALAKHCSDSH), 1407-1432 (FSCNQPQCPAVFYTFNKLKHHLMEQH), 1444-1469 (IHCDLNGCGQIFTHRSNYSQHVYYRH), and 1549-1574 (YPCMVQGCLSVVKLESSIVRHYKRTH). Lysine 1423 is covalently cross-linked (Glycyl lysine isopeptide (Lys-Gly) (interchain with G-Cter in SUMO2)). Glycyl lysine isopeptide (Lys-Gly) (interchain with G-Cter in SUMO2) cross-links involve residues lysine 1599 and lysine 1611. Positions 1620-1654 (SERTEHSHSPGDSSAPIQNTDCCHSSERDGGQKGC) are disordered. The segment covering 1629–1642 (PGDSSAPIQNTDCC) has biased composition (polar residues). Lysine 1696 is covalently cross-linked (Glycyl lysine isopeptide (Lys-Gly) (interchain with G-Cter in SUMO2)). Residues 1725–1757 (ESETRQHSSGQENTVKNPTHVPKENFRKHSQPR) are disordered. Positions 1731–1741 (HSSGQENTVKN) are enriched in polar residues. Residue lysine 1762 forms a Glycyl lysine isopeptide (Lys-Gly) (interchain with G-Cter in SUMO2) linkage. The segment at 1783-1807 (KEDDFDDWEPSEHLTLSNSSQSSND) is disordered. Residues 1796 to 1807 (LTLSNSSQSSND) are compositionally biased toward polar residues.

It belongs to the krueppel C2H2-type zinc-finger protein family. As to quaternary structure, interacts with RIT1 and RIT2. In terms of tissue distribution, widely expressed in fetal and adult tissues.

It localises to the nucleus. May be involved in transcriptional regulation. The protein is Zinc finger protein Rlf (RLF) of Homo sapiens (Human).